Reading from the N-terminus, the 371-residue chain is Transcription termination/antitermination protein NusA (371 aa).

Residues 135–199 (EDIMTGIVQR…KGPQIYVSRT (65 aa)) form the S1 motif domain. One can recognise a KH domain in the interval 301 to 367 (EKATTVIVPD…EPLFTEPETA (67 aa)). The segment at 347–371 (GIYPRELEEDDEPLFTEPETAESDE) is disordered. Residues 353-371 (LEEDDEPLFTEPETAESDE) show a composition bias toward acidic residues.

The protein belongs to the NusA family. Monomer. Binds directly to the core enzyme of the DNA-dependent RNA polymerase and to nascent RNA.

Its subcellular location is the cytoplasm. Functionally, participates in both transcription termination and antitermination. The protein is Transcription termination/antitermination protein NusA of Bacillus subtilis (strain 168).